A 373-amino-acid chain; its full sequence is uncharacterized protein (373 aa).

This is an uncharacterized protein from Thermoproteus tenax.